Here is a 72-residue protein sequence, read N- to C-terminus: Translation initiation factor IF-1 (72 aa).

An S1-like domain is found at 1–72 (MSKEELIEFE…TKGRITYRFK (72 aa)).

This sequence belongs to the IF-1 family. Component of the 30S ribosomal translation pre-initiation complex which assembles on the 30S ribosome in the order IF-2 and IF-3, IF-1 and N-formylmethionyl-tRNA(fMet); mRNA recruitment can occur at any time during PIC assembly.

It localises to the cytoplasm. Its function is as follows. One of the essential components for the initiation of protein synthesis. Stabilizes the binding of IF-2 and IF-3 on the 30S subunit to which N-formylmethionyl-tRNA(fMet) subsequently binds. Helps modulate mRNA selection, yielding the 30S pre-initiation complex (PIC). Upon addition of the 50S ribosomal subunit IF-1, IF-2 and IF-3 are released leaving the mature 70S translation initiation complex. The polypeptide is Translation initiation factor IF-1 (Hyphomonas neptunium (strain ATCC 15444)).